We begin with the raw amino-acid sequence, 240 residues long: MSSLTFFIFCLQLFIFTSTVSGISIKRCTEEENNTWEIEVGLCIQTENFRAIKTGCYKIQGPGGLLTEGNGFKIFAHDDCSKEKTQNNFILDSVNEAVYALGKYVYMEISTSNITTLNSLPQCAKRISLSISCDQVTTEMKSYVESVSFKDYDLEFVITTDISCVKHVSSSVIVRNECEKKYISTGKKIFGFNNKIDCSAVKFSEHVNYLKTCSVGKFDRKKYYEHQHNYIKKIFHHNEL.

Belongs to the poxviruses B9 family.

The sequence is that of T4 protein from Sheeppox virus (strain InS-1) (SPPV).